A 120-amino-acid chain; its full sequence is uncharacterized protein (120 aa).

The protein to E.coli YiaW.

This is an uncharacterized protein from Escherichia coli (strain K12).